Reading from the N-terminus, the 429-residue chain is Sex determination protein fox-1 (429 aa).

Over residues 156–180 (ATTAGSTNGSAAVTQPDPSTSSGPD) the composition is skewed to low complexity. Residues 156 to 188 (ATTAGSTNGSAAVTQPDPSTSSGPDGPKRLHVS) are disordered. The 77-residue stretch at 183–259 (KRLHVSNIPF…RKIEVNCATA (77 aa)) folds into the RRM domain.

Interacts with sup-12. In males and hermaphrodites expressed in a subset of cells in the head and tail. Expressed in the pharynx, intestine and in muscles from the vulva and body wall.

The protein localises to the nucleus. Its function is as follows. RNA-binding protein that regulates tissue-specific alternative splicing events by binding to 5'-UGCAUG-3' and 5'-GCACG-3' elements. Also binds to poly(A), poly(G), poly(C), or poly(U) stretches of RNA. Plays a role in the sex determination pathway and X chromosome dosage compensation, and together with sex-1 is involved in making the distinction between one and two X-chromosomes. Binds to 5'-GCAUG-3' and 5'-GCACG-3' elements in intron 6 of the pre-mRNA of the sex-determining factor xol-1 to promote its alternative splicing and together with sex-1 negatively regulates the expression of xol-1 to promote hermaphrodite development. Negatively regulates the expression of the active isoform of xol-1 (isoform b) by promoting intron 6 retention and the deletion of exon 7 coding sequences in hermaphrodite embryos. Furthermore, binding to the pre-mRNA of xol-1 can also direct the use of an alternative 3' splice site enabling the xol-1 transcript to be trans-spliced to unrelated genes on chromosome 2, which also leads to xol-1 exon 7 deletion. Does not seem to regulate the retention of introns 1 to 5 of xol-1 pre-mRNA. Plays a role in the association of the dosage compensation complex proteins dpy-27 and sdc-3 with the hermaphrodite X chromosomes. Binds to 5'-UGCAUG-3' elements in intron 7 of the pre-mRNA of unc-32 to promote its alternative splicing in neuronal tissues. Binds to 5'-UGCAUG-3' elements in intron 4 of the pre-mRNA of egl-15 to promote its alternative splicing in body wall muscle tissues. Promotes binding of RNA-binding protein sup-12 to target RNA. Plays a role in male mating behavior. The sequence is that of Sex determination protein fox-1 from Caenorhabditis elegans.